The sequence spans 466 residues: Glycine--tRNA ligase (466 aa).

Residues Arg104 and Glu178 each coordinate substrate. ATP contacts are provided by residues 210-212 (RNE), 220-225 (FRTREF), 294-295 (EL), and 338-341 (GADR). 225-229 (FEQME) is a binding site for substrate. Position 334 to 338 (334 to 338 (EPSLG)) interacts with substrate.

This sequence belongs to the class-II aminoacyl-tRNA synthetase family. In terms of assembly, homodimer.

It is found in the cytoplasm. The enzyme catalyses tRNA(Gly) + glycine + ATP = glycyl-tRNA(Gly) + AMP + diphosphate. In terms of biological role, catalyzes the attachment of glycine to tRNA(Gly). The protein is Glycine--tRNA ligase of Geobacillus thermodenitrificans (strain NG80-2).